A 498-amino-acid chain; its full sequence is Tyrosine 3-monooxygenase (498 aa).

Residues 1–10 (MPTPSAPSPQ) show a composition bias toward pro residues. A disordered region spans residues 1–31 (MPTPSAPSPQPKGFRRAVSEQDAKQAEAVTS). Ser-19 is subject to Phosphoserine; by CaMK2. Ser-31 carries the phosphoserine modification. Ser-40 carries the post-translational modification Phosphoserine; by CaMK2 and PKA. Fe cation-binding residues include His-331, His-336, and Glu-376. Ser-472 is subject to Phosphoserine.

The protein belongs to the biopterin-dependent aromatic amino acid hydroxylase family. Homotetramer. Interacts (when phosphorylated at Ser-19) with YWHAG; one YWHAG dimer binds to one TH tetramer and this interaction may influence the phosphorylation and dephosphorylation of other sites. Interacts with NT5DC2; the interaction results in reduced phosphorylation and decreased catalytic activity of TH. It depends on Fe(2+) as a cofactor. In terms of processing, phosphorylated on Ser-19, Ser-31 and Ser-40 by several protein kinases with different site specificities. Phosphorylation at Ser-31 and Ser-40 leads to an increase of TH activity. Phosphorylation at Ser-40 activates the enzyme and also counteracts the feedback inhibition of TH by catecholamines. Phosphorylation of Ser-19 and Ser-31 triggers the proteasomal degradation of TH through the ubiquitin-proteasome pathway. Phosphorylation at Ser-31 facilitates transport of TH from the soma to the nerve terminals via the microtubule network. Phosphorylation at Ser-19 induces the high-affinity binding to the 14-3-3 protein YWHAG; this interaction may influence the phosphorylation and dephosphorylation of other sites. Ser-19 increases the phosphorylation at Ser-40 in a hierarchical manner, leading to increased activity.

Its subcellular location is the cytoplasm. It localises to the perinuclear region. The protein resides in the nucleus. The protein localises to the cell projection. It is found in the axon. Its subcellular location is the cytoplasmic vesicle. It localises to the secretory vesicle. The protein resides in the synaptic vesicle. The enzyme catalyses (6R)-L-erythro-5,6,7,8-tetrahydrobiopterin + L-tyrosine + O2 = (4aS,6R)-4a-hydroxy-L-erythro-5,6,7,8-tetrahydrobiopterin + L-dopa. Its pathway is catecholamine biosynthesis; dopamine biosynthesis; dopamine from L-tyrosine: step 1/2. With respect to regulation, inhibited in feedback fashion by the catecholamine neurotransmitters, especially by dopamine in competition with tetrahydrobiopterin. Phosphorylation of several Ser/Thr residues in the N-terminus regulates the catalytic activity. Ser-31 and Ser-40 are readily phosphorylated to activate the catalytic activity. A cysteine modification induced by N-ethylmaleimide (NEM), inhibits tyrosine 3-monooxygenase activity through the modification of the Cys-177. In terms of biological role, catalyzes the conversion of L-tyrosine to L-dihydroxyphenylalanine (L-Dopa), the rate-limiting step in the biosynthesis of catecholamines, dopamine, noradrenaline, and adrenaline. Uses tetrahydrobiopterin and molecular oxygen to convert tyrosine to L-Dopa. In addition to tyrosine, is able to catalyze the hydroxylation of phenylalanine and tryptophan but with lower specificity. Positively regulates the regression of retinal hyaloid vessels during postnatal development. This Rattus norvegicus (Rat) protein is Tyrosine 3-monooxygenase (Th).